Consider the following 233-residue polypeptide: Small ribosomal subunit protein eS4 (233 aa).

The region spanning 37–99 (VPLVVVLRDV…RDEYYRVFPD (63 aa)) is the S4 RNA-binding domain.

This sequence belongs to the eukaryotic ribosomal protein eS4 family.

In Halobacterium salinarum (strain ATCC 29341 / DSM 671 / R1), this protein is Small ribosomal subunit protein eS4.